The following is an 82-amino-acid chain: MVTIRLSRGGAKKRPFYQIVVADSRSPRDGRFIERVGFFNPLATGNAERLRLDLDRVNAWVEKGASLSDRVSALVKEAQKAA.

It belongs to the bacterial ribosomal protein bS16 family.

The polypeptide is Small ribosomal subunit protein bS16 (Pasteurella multocida (strain Pm70)).